A 275-amino-acid chain; its full sequence is Biotin synthase (275 aa).

The region spanning 1–217 is the Radical SAM core domain; sequence MLCAICNVSS…DTAKTLPQCR (217 aa). Cysteine 13, cysteine 17, and cysteine 20 together coordinate [4Fe-4S] cluster. [2Fe-2S] cluster-binding residues include cysteine 57, cysteine 92, cysteine 150, and arginine 217.

It belongs to the radical SAM superfamily. Biotin synthase family. Homodimer. The cofactor is [4Fe-4S] cluster. Requires [2Fe-2S] cluster as cofactor.

It catalyses the reaction (4R,5S)-dethiobiotin + (sulfur carrier)-SH + 2 reduced [2Fe-2S]-[ferredoxin] + 2 S-adenosyl-L-methionine = (sulfur carrier)-H + biotin + 2 5'-deoxyadenosine + 2 L-methionine + 2 oxidized [2Fe-2S]-[ferredoxin]. Its pathway is cofactor biosynthesis; biotin biosynthesis; biotin from 7,8-diaminononanoate: step 2/2. Its function is as follows. Catalyzes the conversion of dethiobiotin (DTB) to biotin by the insertion of a sulfur atom into dethiobiotin via a radical-based mechanism. This Campylobacter fetus subsp. fetus (strain 82-40) protein is Biotin synthase.